The sequence spans 453 residues: HTH-type pyridoxine biosynthesis transcriptional regulator PdxR (453 aa).

An HTH gntR-type domain is found at 15–83; the sequence is TSIPTQLTEQ…RGSGTTINPD (69 aa). The segment at residues 43-62 is a DNA-binding region (H-T-H motif); it reads SRSLSTQLGVSRGSVVTAYD.

In the C-terminal section; belongs to the class-I pyridoxal-phosphate-dependent aminotransferase family. It depends on pyridoxal 5'-phosphate as a cofactor.

May have a regulatory function in pyridoxine biosynthesis. Is said to also have an aminotransferase activity in valine biosynthesis as a double inactivation of ilvE and pdxR results in an auxotrophic requirement for valine. The polypeptide is HTH-type pyridoxine biosynthesis transcriptional regulator PdxR (pdxR) (Corynebacterium glutamicum (strain ATCC 13032 / DSM 20300 / JCM 1318 / BCRC 11384 / CCUG 27702 / LMG 3730 / NBRC 12168 / NCIMB 10025 / NRRL B-2784 / 534)).